We begin with the raw amino-acid sequence, 517 residues long: Protein ERGIC-53 (517 aa).

A signal peptide spans 1–30 (MAVSRRRGPQAGAQSFFCALLLSFSQFVGS). Topologically, residues 31 to 484 (DGMGGDAAAP…DLPAFPSCLS (454 aa)) are lumenal. The 224-residue stretch at 52–275 (RRFEYKYSFK…DVLSFLTFQL (224 aa)) folds into the L-type lectin-like domain. A carbohydrate-binding residues include serine 96 and aspartate 129. Aspartate 160, phenylalanine 162, aspartate 163, asparagine 164, aspartate 165, asparagine 169, and asparagine 170 together coordinate Ca(2+). Asparagine 164 provides a ligand contact to a carbohydrate. Histidine 186 contacts a carbohydrate. A Ca(2+)-binding site is contributed by aspartate 189. Residues cysteine 198 and cysteine 238 are joined by a disulfide bond. 259–261 (GGL) provides a ligand contact to a carbohydrate. Disordered regions lie at residues 276-297 (TEPG…KEKY) and 377-396 (EISR…SQQE). The span at 278–297 (PGKEPPTPEKDISEKEKEKY) shows a compositional bias: basic and acidic residues. Serine 433 carries the phosphoserine modification. The chain crosses the membrane as a helical span at residues 485–505 (TVHFVIFIVVQTVLFIGYIMY). Residues 506–517 (RTQQEAAAKKFF) are Cytoplasmic-facing. The mediates interaction with RAB3GAP1, RAB3GAP2 and UBXN6 stretch occupies residues 506–517 (RTQQEAAAKKFF). The short motif at 516 to 517 (FF) is the ER export motif element.

Exists both as a covalent disulfide-linked homohexamer, and a complex of three disulfide-linked dimers non-covalently kept together. Interacts with MCFD2. May interact with TMEM115. Interacts with RAB3GAP1 and RAB3GAP2. Interacts with UBXN6. Interacts with SERPINA1/alpha1-antitrypsin. Interacts with BET1.

Its subcellular location is the endoplasmic reticulum-Golgi intermediate compartment membrane. It is found in the golgi apparatus membrane. The protein localises to the endoplasmic reticulum membrane. Its function is as follows. Mannose-specific lectin. May recognize sugar residues of glycoproteins, glycolipids, or glycosylphosphatidyl inositol anchors and may be involved in the sorting or recycling of proteins, lipids, or both. The LMAN1-MCFD2 complex forms a specific cargo receptor for the ER-to-Golgi transport of selected proteins. This is Protein ERGIC-53 (Lman1) from Rattus norvegicus (Rat).